Here is a 380-residue protein sequence, read N- to C-terminus: XK-related protein 9 (380 aa).

A run of 8 helical transmembrane segments spans residues Leu-10–Val-30, Val-39–Phe-59, Leu-81–Ile-101, Cys-167–Val-187, Ala-228–Gly-248, Ser-264–Val-284, Ile-294–Leu-314, and Thr-329–Leu-349.

This sequence belongs to the XK family.

It localises to the cell membrane. The enzyme catalyses a 1,2-diacyl-sn-glycero-3-phospho-L-serine(in) = a 1,2-diacyl-sn-glycero-3-phospho-L-serine(out). Its function is as follows. Phospholipid scramblase that promotes phosphatidylserine exposure on apoptotic cell surface. Phosphatidylserine is a specific marker only present at the surface of apoptotic cells and acts as a specific signal for engulfment. In Tetraodon nigroviridis (Spotted green pufferfish), this protein is XK-related protein 9.